The sequence spans 788 residues: MSDGQWVCLSSEEFDQLQKYSEYSSKKIKDVLAEFNEGGSLKQYDPHKPISYDVFKLFMRAYLEVDLPQPLSTNLFLAFSQKPRQETPDHPKEGASSSEPNVSDSNAESTAKADAACAPDTESKPIKTQVPSEELEAAAPWGEPNAPASSSDAPIVYLKDVVCYLSLMETGRPQDKLEFMFRLYDSDENELLDQAELDQIVSQMLHVAQYLEWDPTELRPILKEMLQGMDYNKDGFVSLEEWVSGGMTTIPLLVLLGMDDSASKGDGRHAWTLKHFKKPTYCNFCHIMLMGVRKQGLCCIYCKYAVHQRCVSNSIPGCVKTYSKAKRSGEVMQHAWVEGNSSVKCDRCHKSIKCYQSVTARHCVWCRMTFHRKCELSTACDGGELKDHILLPTSIYPVTRDRQAGKSDSGAAAKGELVMQYKIIPSPGTHPLLVLVNPKSGGRQGERILQKFHYLLNPKQVFNLDKGGPTPGLNFFQDTPDFRVLACGGDGTVGWILDCIDKANFTKHPPVAVLPLGTGNDLARCLRWGGGYEGGSLTKILKEIEQSPLVMLDRWYLEVMPREEVENGDQVPYNIMNNYFSIGVDASIAHRFHVMREKHPEKFNSRMKNKLWYFEFGTSETFAATCKKLHDHIELECDGVEVDLSNIFLEGIAILNIPSMYGGTNLWGETKKNRAVIRESRKSVTDPKELKCCVQDLSDQLLEVVGLEGAMEMGQIYTGLKSAGRRLAQCSSVTIRTKKLLPMQVDGEPWMQPPCMIKITHKNQAPMMMGPPQKSSFFSLRRKSRSKD.

Residues Pro-83 to Glu-93 are compositionally biased toward basic and acidic residues. The interval Pro-83 to Ser-150 is disordered. A compositionally biased stretch (polar residues) spans Ala-95–Ser-109. EF-hand domains follow at residues Arg-172–Val-207 and Glu-217–Leu-252. The Ca(2+) site is built by Asp-185, Asp-187, Asn-189, Glu-196, Asp-230, Asn-232, Asp-234, and Glu-241. 2 consecutive Phorbol-ester/DAG-type zinc fingers follow at residues Arg-268–Cys-318 and Gln-333–Cys-380. The DAGKc domain maps to Pro-427–Pro-561. The interval Met-768–Asp-788 is disordered.

The protein belongs to the eukaryotic diacylglycerol kinase family. As to expression, expressed specifically in brain. Highly expressed in cerebellar Purkinje cells (at protein level).

It localises to the membrane. The protein localises to the cytoplasm. Its subcellular location is the cytosol. The protein resides in the cytoskeleton. It catalyses the reaction a 1,2-diacyl-sn-glycerol + ATP = a 1,2-diacyl-sn-glycero-3-phosphate + ADP + H(+). The catalysed reaction is 1,2-didecanoyl-sn-glycerol + ATP = 1,2-didecanoyl-sn-glycero-3-phosphate + ADP + H(+). It carries out the reaction 1,2-di-(9Z-octadecenoyl)-sn-glycerol + ATP = 1,2-di-(9Z-octadecenoyl)-sn-glycero-3-phosphate + ADP + H(+). The enzyme catalyses 1-octadecanoyl-2-(9Z,12Z)-octadecadienoyl-sn-glycerol + ATP = 1-octadecanoyl-2-(9Z,12Z-octadecadienoyl)-sn-glycero-3-phosphate + ADP + H(+). It catalyses the reaction 1-octadecanoyl-2-(5Z,8Z,11Z,14Z-eicosatetraenoyl)-sn-glycerol + ATP = 1-octadecanoyl-2-(5Z,8Z,11Z,14Z-eicosatetraenoyl)-sn-glycero-3-phosphate + ADP + H(+). It functions in the pathway lipid metabolism; glycerolipid metabolism. Its activity is regulated as follows. The activity is calcium-dependent. Requires phosphatidylserine for maximal activity. Diacylglycerol kinase that converts diacylglycerol/DAG into phosphatidic acid/phosphatidate/PA and regulates the respective levels of these two bioactive lipids. Thereby, acts as a central switch between the signaling pathways activated by these second messengers with different cellular targets and opposite effects in numerous biological processes. Has no apparent specificity with regard to the acyl compositions of diacylglycerol. Specifically expressed in the cerebellum where it controls the level of diacylglycerol which in turn regulates the activity of protein kinase C gamma. Through protein kinase C gamma, indirectly regulates the dendritic development of Purkinje cells, cerebellar long term depression and ultimately cerebellar motor coordination. The protein is Diacylglycerol kinase gamma (Dgkg) of Rattus norvegicus (Rat).